Consider the following 557-residue polypeptide: Laccase-11 (557 aa).

The N-terminal stretch at 1–23 (MKMGFLFLFCYLLAFLGYSPVDA) is a signal peptide. 2 consecutive Plastocyanin-like domains span residues 31–147 (DVQV…PAPG) and 158–308 (ESNI…YKGV). 3 N-linked (GlcNAc...) asparagine glycosylation sites follow: Asn36, Asn69, and Asn77. The Cu cation site is built by His81 and His83. Asn115 is a glycosylation site (N-linked (GlcNAc...) asparagine). Cu cation-binding residues include His126 and His128. N-linked (GlcNAc...) asparagine glycans are attached at residues Asn240, Asn296, Asn323, Asn371, Asn381, Asn398, Asn416, and Asn440. Residues 406 to 541 (DFPDRPPKAF…KMAFVVENGE (136 aa)) form the Plastocyanin-like 3 domain. Cu cation is bound by residues His458, His461, His463, His520, Cys521, His522, and His526.

The protein belongs to the multicopper oxidase family. Cu cation is required as a cofactor. As to expression, ubiquitous and constitutive.

Its subcellular location is the secreted. It is found in the extracellular space. The protein resides in the apoplast. It carries out the reaction 4 hydroquinone + O2 = 4 benzosemiquinone + 2 H2O. Lignin degradation and detoxification of lignin-derived products. This Arabidopsis thaliana (Mouse-ear cress) protein is Laccase-11 (LAC11).